A 384-amino-acid polypeptide reads, in one-letter code: Lipid-A-disaccharide synthase (384 aa).

Belongs to the LpxB family.

The catalysed reaction is a lipid X + a UDP-2-N,3-O-bis[(3R)-3-hydroxyacyl]-alpha-D-glucosamine = a lipid A disaccharide + UDP + H(+). It participates in bacterial outer membrane biogenesis; LPS lipid A biosynthesis. Condensation of UDP-2,3-diacylglucosamine and 2,3-diacylglucosamine-1-phosphate to form lipid A disaccharide, a precursor of lipid A, a phosphorylated glycolipid that anchors the lipopolysaccharide to the outer membrane of the cell. This Gloeothece citriformis (strain PCC 7424) (Cyanothece sp. (strain PCC 7424)) protein is Lipid-A-disaccharide synthase.